We begin with the raw amino-acid sequence, 1375 residues long: uncharacterized protein (1375 aa).

In terms of domain architecture, Helicase ATP-binding spans 277-476 (LLASGDIRGG…FGLLFLLRYS (200 aa)). 290 to 297 (DEMGMGKT) is a binding site for ATP. Residues 1092 to 1130 (CIICRDIIKQGFITTCGHLYCSFCLEAWLKHSSSCPMCK) form an RING-type zinc finger. One can recognise a Helicase C-terminal domain in the interval 1190-1336 (TISKHLLYLK…QLDKLGLDVP (147 aa)).

This sequence belongs to the SNF2/RAD54 helicase family.

The protein localises to the nucleus. This is an uncharacterized protein from Schizosaccharomyces pombe (strain 972 / ATCC 24843) (Fission yeast).